Reading from the N-terminus, the 757-residue chain is MAVHRGSALVAPASDKVQKNKSAQTSGLKQGSRMEKILGFEWTDLSSWQSVVTLLNKPTDPANLAVFRFLFAFLMLLDIPQERGLSSLDRKYLDGLDVCRFPLLDALRPLPLDWMYLVYTIMFLGALGMMLGLCYRLSCVLFLLPYWYVFLLDKTSWNNHSYLYGLLAFQLTFMDANHYWSVDGLLNARKKNAHVPLWNYTVLRGQIFIVYFIAGVKKLDADWVGGYSMEHLSRHWLFSPFKLVLSEELTSLLVVHWCGLLLDLSAGFLLFFDASRPVGLFFVSYFHCMNSQLFSIGMFPYVMLASSPLFCSAEWPRKLVARCPKRLQELLPTKAAPRPSASCVYKRSRGKAGPKPGLRHQLGAIFTLLYLLEQLFLPYSHFLTQGYNNWTNGLYGYSWDMMVHSRSHQHVKITYRDGLTGELGYLNPGVFTQSRRWKDHADMLKQYATCLSLLLPKYNVTEPQIYFDIWVSINDRFQQRLFDPRVDIVQAVWSPFQRTPWVQPLLMDLSPWRTKLQDIKSSLDNHTEVVFIADFPGLHLENFVSEDLGNTSIQLLQGEVTVELVAEQKNQTLQEGEKMQLPAGEYHKVYTVSSSPSCYMYVYVNTTEVALEQDLAYLQELKEKVENGSETGPLPPELQPLLEGEVKGGPEPTPLVQTFLRRQRKLQEIERRRNSPFHERFLRFVLRKLYVFRRSFLMTRISLRNLLLGRPSLEQLAQEVTYANLRPFEPVDESSASNTDSSNHPSEPDSEHVHSEF.

An N-acetylalanine modification is found at Ala2. The Cytoplasmic segment spans residues 2 to 60 (AVHRGSALVAPASDKVQKNKSAQTSGLKQGSRMEKILGFEWTDLSSWQSVVTLLNKPTD). The helical transmembrane segment at 61-81 (PANLAVFRFLFAFLMLLDIPQ) threads the bilayer. Residues 82-113 (ERGLSSLDRKYLDGLDVCRFPLLDALRPLPLD) lie on the Lumenal side of the membrane. A disulfide bridge connects residues Cys99 and Cys450. Residues 114 to 134 (WMYLVYTIMFLGALGMMLGLC) traverse the membrane as a helical segment. Topologically, residues 135-136 (YR) are cytoplasmic. Residues 137–157 (LSCVLFLLPYWYVFLLDKTSW) form a helical membrane-spanning segment. Topologically, residues 158–292 (NNHSYLYGLL…VSYFHCMNSQ (135 aa)) are lumenal. A helical transmembrane segment spans residues 293–313 (LFSIGMFPYVMLASSPLFCSA). Topologically, residues 314–361 (EWPRKLVARCPKRLQELLPTKAAPRPSASCVYKRSRGKAGPKPGLRHQ) are cytoplasmic. Residues 362–382 (LGAIFTLLYLLEQLFLPYSHF) traverse the membrane as a helical segment. Over 383–757 (LTQGYNNWTN…PDSEHVHSEF (375 aa)) the chain is Lumenal. Residues 729 to 757 (EPVDESSASNTDSSNHPSEPDSEHVHSEF) are disordered. Positions 734–745 (SSASNTDSSNHP) are enriched in polar residues. Residues 746–757 (SEPDSEHVHSEF) are compositionally biased toward basic and acidic residues.

The protein belongs to the vitamin K-dependent gamma-carboxylase family. As to quaternary structure, monomer. May interact with CALU.

The protein resides in the endoplasmic reticulum membrane. The catalysed reaction is 4-carboxy-L-glutamyl-[protein] + 2,3-epoxyphylloquinone + H2O + H(+) = phylloquinol + L-glutamyl-[protein] + CO2 + O2. Mediates the vitamin K-dependent carboxylation of glutamate residues to calcium-binding gamma-carboxyglutamate (Gla) residues with the concomitant conversion of the reduced hydroquinone form of vitamin K to vitamin K epoxide. Catalyzes gamma-carboxylation of various proteins, such as blood coagulation factors (F2, F7, F9 and F10), osteocalcin (bglap and bglap2) or matrix Gla protein (MGP). The sequence is that of Vitamin K-dependent gamma-carboxylase (Ggcx) from Mus musculus (Mouse).